The chain runs to 511 residues: Bifunctional purine biosynthesis protein PurH (511 aa).

In terms of domain architecture, MGS-like spans 1–146 (MARLALLSVS…KNFAHTTVLT (146 aa)).

The protein belongs to the PurH family.

The enzyme catalyses (6R)-10-formyltetrahydrofolate + 5-amino-1-(5-phospho-beta-D-ribosyl)imidazole-4-carboxamide = 5-formamido-1-(5-phospho-D-ribosyl)imidazole-4-carboxamide + (6S)-5,6,7,8-tetrahydrofolate. It catalyses the reaction IMP + H2O = 5-formamido-1-(5-phospho-D-ribosyl)imidazole-4-carboxamide. The protein operates within purine metabolism; IMP biosynthesis via de novo pathway; 5-formamido-1-(5-phospho-D-ribosyl)imidazole-4-carboxamide from 5-amino-1-(5-phospho-D-ribosyl)imidazole-4-carboxamide (10-formyl THF route): step 1/1. It functions in the pathway purine metabolism; IMP biosynthesis via de novo pathway; IMP from 5-formamido-1-(5-phospho-D-ribosyl)imidazole-4-carboxamide: step 1/1. This Synechocystis sp. (strain ATCC 27184 / PCC 6803 / Kazusa) protein is Bifunctional purine biosynthesis protein PurH.